Consider the following 215-residue polypeptide: Large ribosomal subunit protein uL1 (215 aa).

The protein belongs to the universal ribosomal protein uL1 family. Part of the 50S ribosomal subunit.

Functionally, binds directly to 23S rRNA. Probably involved in E site tRNA release. Its function is as follows. Protein L1 is also a translational repressor protein, it controls the translation of its operon by binding to its mRNA. The polypeptide is Large ribosomal subunit protein uL1 (Archaeoglobus fulgidus (strain ATCC 49558 / DSM 4304 / JCM 9628 / NBRC 100126 / VC-16)).